Consider the following 264-residue polypeptide: Transmembrane protein 41A (264 aa).

Positions M1 to A17 are cleaved as a signal peptide. Helical transmembrane passes span V67–G87, F90–V110, L153–L173, A175–P195, and W219–I239. The VTT domain stretch occupies residues G96–L207.

This sequence belongs to the TMEM41 family.

The protein resides in the membrane. The chain is Transmembrane protein 41A (TMEM41A) from Bos taurus (Bovine).